We begin with the raw amino-acid sequence, 193 residues long: Cysteine and glycine-rich protein 1 (193 aa).

The LIM zinc-binding 1 domain maps to 10-61; sequence CGVCQKTVYFAEEVQCEGNSFHKSCFLCMVCKKNLDSTTVAVHGEEIYCKSC. Residues 64–69 carry the Nuclear localization signal motif; it reads KKYGPK. Residue S81 is modified to Phosphoserine. K84 carries the N6-acetyllysine modification. A Glycyl lysine isopeptide (Lys-Gly) (interchain with G-Cter in SUMO2) cross-link involves residue K91. An N6-acetyllysine mark is found at K112, K131, K137, and K161. An LIM zinc-binding 2 domain is found at 119-170; sequence CPRCSQAVYAAEKVIGAGKSWHKSCFRCAKCGKGLESTTLADKDGEIYCKGC. S192 carries the phosphoserine modification.

Interacts with ASCC1; ASCC2 and TRIP4.

The protein localises to the nucleus. Could play a role in neuronal development. The protein is Cysteine and glycine-rich protein 1 (Csrp1) of Mus musculus (Mouse).